The chain runs to 422 residues: Tryptophan synthase beta chain (422 aa).

The residue at position 111 (Lys111) is an N6-(pyridoxal phosphate)lysine.

Belongs to the TrpB family. Tetramer of two alpha and two beta chains. Pyridoxal 5'-phosphate serves as cofactor.

The catalysed reaction is (1S,2R)-1-C-(indol-3-yl)glycerol 3-phosphate + L-serine = D-glyceraldehyde 3-phosphate + L-tryptophan + H2O. The protein operates within amino-acid biosynthesis; L-tryptophan biosynthesis; L-tryptophan from chorismate: step 5/5. Its function is as follows. The beta subunit is responsible for the synthesis of L-tryptophan from indole and L-serine. In Pseudothermotoga lettingae (strain ATCC BAA-301 / DSM 14385 / NBRC 107922 / TMO) (Thermotoga lettingae), this protein is Tryptophan synthase beta chain.